Here is a 382-residue protein sequence, read N- to C-terminus: Mannitol-1-phosphate 5-dehydrogenase (382 aa).

An NAD(+)-binding site is contributed by 4–15; that stretch reads AVHFGAGNIGRG.

The protein belongs to the mannitol dehydrogenase family. As to quaternary structure, monomer.

It catalyses the reaction D-mannitol 1-phosphate + NAD(+) = beta-D-fructose 6-phosphate + NADH + H(+). The polypeptide is Mannitol-1-phosphate 5-dehydrogenase (mtlD) (Streptococcus mutans serotype c (strain ATCC 700610 / UA159)).